The sequence spans 708 residues: Glycine--tRNA ligase beta subunit (708 aa).

Belongs to the class-II aminoacyl-tRNA synthetase family. As to quaternary structure, tetramer of two alpha and two beta subunits.

It is found in the cytoplasm. The catalysed reaction is tRNA(Gly) + glycine + ATP = glycyl-tRNA(Gly) + AMP + diphosphate. This is Glycine--tRNA ligase beta subunit from Paracidovorax citrulli (strain AAC00-1) (Acidovorax citrulli).